Reading from the N-terminus, the 217-residue chain is MKVFEFLKGKRGAMGIGTLIIFIAMVLVAAVAAAVLINTSGFLQQKAMATGKESTEQVASGLSTLQVIGIHDNKAINYLAIYITPNAGSAAIDLNQTKILITDGEKKAVLRYNSNAYADLTTGGEVTNTSLAAWNLSGGEFGIIVLQDADGSCKSTTPVINKGDIVALTINASAVGLNLVPRTTVTGSVIPEFGAPAVIEFTTPAAYLSTQEVIQLQ.

The propeptide occupies 1–12; it reads MKVFEFLKGKRG.

It belongs to the archaeal flagellin family.

The protein resides in the archaeal flagellum. Its function is as follows. Flagellin is the subunit protein which polymerizes to form the filaments of archaeal flagella. This Methanocaldococcus jannaschii (strain ATCC 43067 / DSM 2661 / JAL-1 / JCM 10045 / NBRC 100440) (Methanococcus jannaschii) protein is Flagellin B2 (flaB2).